A 348-amino-acid polypeptide reads, in one-letter code: Killer cell immunoglobulin-like receptor 2DL1 (348 aa).

The first 21 residues, 1-21, serve as a signal peptide directing secretion; sequence MSLLVVSMACVGFFLLQGAWP. At 22–245 the chain is on the extracellular side; sequence HEGVHRKPSL…SKTGNPRHLH (224 aa). 2 Ig-like C2-type domains span residues 42 to 107 and 142 to 205; these read EETV…VTHS and GENV…FHDS. Residues Cys-49 and Cys-100 are joined by a disulfide bond. Residues Asn-67, Asn-84, Asn-144, and Asn-178 are each glycosylated (N-linked (GlcNAc...) asparagine). Cys-149 and Cys-198 are disulfide-bonded. The interval 220-239 is disordered; the sequence is VTGNPSNSWPSPTEPSSKTG. Residues 246–264 form a helical membrane-spanning segment; the sequence is ILIGTSVVIILFILLFFLL. Residues 265 to 348 lie on the Cytoplasmic side of the membrane; the sequence is HRWCSNKKNA…ESRSKVVSCP (84 aa).

Belongs to the immunoglobulin superfamily. Interacts with ARRB2. Interacts with PTPN6; the interaction is enhanced by ARRB2. Interacts with PTPN11; the interaction is enhanced by ARRB2. As to expression, expressed by NK cells.

The protein resides in the cell membrane. Its function is as follows. Receptor on natural killer (NK) cells for some HLA-C alleles such as w4 and w6. Inhibits the activity of NK cells thus preventing cell lysis. This Homo sapiens (Human) protein is Killer cell immunoglobulin-like receptor 2DL1.